The following is a 189-amino-acid chain: Methylated-DNA--protein-cysteine methyltransferase (189 aa).

2 residues coordinate DNA: Tyr-128 and Arg-142. Catalysis depends on Cys-159, which acts as the Nucleophile; methyl group acceptor. Ser-165 is a DNA binding site.

The protein belongs to the MGMT family.

It localises to the nucleus. It carries out the reaction a 6-O-methyl-2'-deoxyguanosine in DNA + L-cysteinyl-[protein] = S-methyl-L-cysteinyl-[protein] + a 2'-deoxyguanosine in DNA. It catalyses the reaction a 4-O-methyl-thymidine in DNA + L-cysteinyl-[protein] = a thymidine in DNA + S-methyl-L-cysteinyl-[protein]. Its function is as follows. Involved in the cellular defense against the biological effects of O6-methylguanine (O6-MeG) and O4-methylthymine (O4-MeT) in DNA. Repairs the methylated nucleobase in DNA by stoichiometrically transferring the methyl group to a cysteine residue in the enzyme. This is a suicide reaction: the enzyme is irreversibly inactivated. The sequence is that of Methylated-DNA--protein-cysteine methyltransferase (MGT1) from Kluyveromyces lactis (strain ATCC 8585 / CBS 2359 / DSM 70799 / NBRC 1267 / NRRL Y-1140 / WM37) (Yeast).